The following is a 308-amino-acid chain: Glutaminase (308 aa).

Residues Ser-66, Asn-117, Glu-161, Asn-168, Tyr-192, Tyr-244, and Val-262 each contribute to the substrate site.

Belongs to the glutaminase family. Homotetramer.

It catalyses the reaction L-glutamine + H2O = L-glutamate + NH4(+). In Cronobacter sakazakii (strain ATCC BAA-894) (Enterobacter sakazakii), this protein is Glutaminase.